The chain runs to 87 residues: DNA-directed RNA polymerase subunit omega (87 aa).

This sequence belongs to the RNA polymerase subunit omega family. As to quaternary structure, the RNAP catalytic core consists of 2 alpha, 1 beta, 1 beta' and 1 omega subunit. When a sigma factor is associated with the core the holoenzyme is formed, which can initiate transcription.

The catalysed reaction is RNA(n) + a ribonucleoside 5'-triphosphate = RNA(n+1) + diphosphate. Promotes RNA polymerase assembly. Latches the N- and C-terminal regions of the beta' subunit thereby facilitating its interaction with the beta and alpha subunits. This Pseudomonas putida (strain ATCC 700007 / DSM 6899 / JCM 31910 / BCRC 17059 / LMG 24140 / F1) protein is DNA-directed RNA polymerase subunit omega.